Consider the following 379-residue polypeptide: Cobalt-precorrin-5B C(1)-methyltransferase (379 aa).

Belongs to the CbiD family.

The enzyme catalyses Co-precorrin-5B + S-adenosyl-L-methionine = Co-precorrin-6A + S-adenosyl-L-homocysteine. It functions in the pathway cofactor biosynthesis; adenosylcobalamin biosynthesis; cob(II)yrinate a,c-diamide from sirohydrochlorin (anaerobic route): step 6/10. Its function is as follows. Catalyzes the methylation of C-1 in cobalt-precorrin-5B to form cobalt-precorrin-6A. This chain is Cobalt-precorrin-5B C(1)-methyltransferase, found in Salmonella arizonae (strain ATCC BAA-731 / CDC346-86 / RSK2980).